The following is a 686-amino-acid chain: Protein-glutamine gamma-glutamyltransferase 2 (686 aa).

N-acetylalanine is present on A2. Disulfide bonds link C230/C370 and C370/C371. Active-site residues include C277, H335, and D358. Residues N398, D400, E437, E447, and E452 each coordinate Ca(2+). Residue K468 is modified to N6-acetyllysine. 476 to 483 (RIRVGDSM) lines the GTP pocket. E538 serves as a coordination point for Ca(2+). 579–582 (RDLY) is a binding site for GTP. Q632 is covalently cross-linked (Isoglutamyl lysine isopeptide (Gln-Lys) (interchain with K-?)).

This sequence belongs to the transglutaminase superfamily. Transglutaminase family. In terms of assembly, monomer. Interacts with phospholipase C; promoting alpha-1 adrenergic receptor signaling. Interacts with PLCD1. Requires Ca(2+) as cofactor. In terms of processing, disulfide bond formation inactivates the calcium-dependent acyltransferase activity. Cys-370 can form disulfide bonds with both Cys-230 and Cys-371: formation of a disulfide bond between Cys-230 and Cys-370 facilitates formation of the disulfide between Cys-370 and Cys-371, which promotes inactivation of the acyltransferase activity. May also form interchain disulfids between Cys-230 and Cys-370. Ca(2+) protects against disulfide bond formation and inactivation. Auto-transglutaminated: Forms covalent cross-links mediated by transglutaminase between Gln-632 and the epsilon-amino group of a lysine residue of itself or HMGB1, forming homopolymers and heteropolymers, respectively. Post-translationally, S-nitrosylated, leading to inactivation of the acyltransferase activity.

Its subcellular location is the cytoplasm. It is found in the cytosol. The protein resides in the nucleus. The protein localises to the chromosome. It localises to the secreted. Its subcellular location is the extracellular space. It is found in the extracellular matrix. The protein resides in the cell membrane. The protein localises to the mitochondrion. The enzyme catalyses L-glutaminyl-[protein] + L-lysyl-[protein] = [protein]-L-lysyl-N(6)-5-L-glutamyl-[protein] + NH4(+). It catalyses the reaction L-glutaminyl-[protein] + serotonin = 5-serotonyl-L-glutamyl-[protein] + NH4(+). The catalysed reaction is L-glutaminyl-[protein] + dopamine = 5-dopaminyl-L-glutamyl-[protein] + NH4(+). It carries out the reaction L-glutaminyl-[protein] + histamine = 5-histaminyl-L-glutamyl-[protein] + NH4(+). The enzyme catalyses L-glutaminyl-[protein] + (R)-noradrenaline = 5-(R)-noradrenalinyl-L-glutamyl-[protein] + NH4(+). It catalyses the reaction L-glutaminyl-[protein] + H2O = L-glutamyl-[protein] + NH4(+). Its activity is regulated as follows. Acyltransferase activity is regulated by the binding of GTP and Ca(2+): inactivated by GTP, which stabilizes its closed structure, thereby obstructing the accessibility of substrates to the active sites. In contrast, Ca(2+) acts as a cofactor by inducing conformational change to the active open form. In absence of Ca(2+), Mg(2+) may bind Ca(2+)-binding sites, promoting GTP-binding and subsequent inhibition of the acyltransferase activity. Extracellularly reduced and activated by CLIC3. Functionally, calcium-dependent acyltransferase that catalyzes the formation of covalent bonds between peptide-bound glutamine and various primary amines, such as gamma-amino group of peptide-bound lysine, or mono- and polyamines, thereby producing cross-linked or aminated proteins, respectively. Involved in many biological processes, such as bone development, angiogenesis, wound healing, cellular differentiation, chromatin modification and apoptosis. Acts as a protein-glutamine gamma-glutamyltransferase by mediating the cross-linking of proteins, such as ACO2, HSPB6, FN1, HMGB1, RAP1GDS1, SLC25A4/ANT1, SPP1 and WDR54. Under physiological conditions, the protein cross-linking activity is inhibited by GTP; inhibition is relieved by Ca(2+) in response to various stresses. When secreted, catalyzes cross-linking of proteins of the extracellular matrix, such as FN1 and SPP1 resulting in the formation of scaffolds. Plays a key role during apoptosis, both by (1) promoting the cross-linking of cytoskeletal proteins resulting in condensation of the cytoplasm, and by (2) mediating cross-linking proteins of the extracellular matrix, resulting in the irreversible formation of scaffolds that stabilize the integrity of the dying cells before their clearance by phagocytosis, thereby preventing the leakage of harmful intracellular components. In addition to protein cross-linking, can use different monoamine substrates to catalyze a vast array of protein post-translational modifications: mediates aminylation of serotonin, dopamine, noradrenaline or histamine into glutamine residues of target proteins to generate protein serotonylation, dopaminylation, noradrenalinylation or histaminylation, respectively. Mediates protein serotonylation of small GTPases during activation and aggregation of platelets, leading to constitutive activation of these GTPases. Plays a key role in chromatin organization by mediating serotonylation and dopaminylation of histone H3. Catalyzes serotonylation of 'Gln-5' of histone H3 (H3Q5ser) during serotonergic neuron differentiation, thereby facilitating transcription. Acts as a mediator of neurotransmission-independent role of nuclear dopamine in ventral tegmental area (VTA) neurons: catalyzes dopaminylation of 'Gln-5' of histone H3 (H3Q5dop), thereby regulating relapse-related transcriptional plasticity in the reward system. Regulates vein remodeling by mediating serotonylation and subsequent inactivation of ATP2A2/SERCA2. Also acts as a protein deamidase by mediating the side chain deamidation of specific glutamine residues of proteins to glutamate. Catalyzes specific deamidation of protein gliadin, a component of wheat gluten in the diet. May also act as an isopeptidase cleaving the previously formed cross-links. Also able to participate in signaling pathways independently of its acyltransferase activity: acts as a signal transducer in alpha-1 adrenergic receptor-mediated stimulation of phospholipase C-delta (PLCD) activity and is required for coupling alpha-1 adrenergic agonists to the stimulation of phosphoinositide lipid metabolism. This is Protein-glutamine gamma-glutamyltransferase 2 from Mus musculus (Mouse).